Here is a 399-residue protein sequence, read N- to C-terminus: Ribose-phosphate pyrophosphokinase 2, chloroplastic (399 aa).

The N-terminal 32 residues, 1-32 (MAAKAAALSSSPFVSSRRLSSPAASLRARTPR), are a transit peptide targeting the chloroplast. 4 residues coordinate Mg(2+): D214, H216, D225, and D229. The interval 299–314 (GKVAIMVDDMIDTAGT) is binding of phosphoribosylpyrophosphate.

This sequence belongs to the ribose-phosphate pyrophosphokinase family. It depends on Mg(2+) as a cofactor.

It localises to the plastid. The protein resides in the chloroplast. It catalyses the reaction D-ribose 5-phosphate + ATP = 5-phospho-alpha-D-ribose 1-diphosphate + AMP + H(+). This Oryza sativa subsp. japonica (Rice) protein is Ribose-phosphate pyrophosphokinase 2, chloroplastic.